The primary structure comprises 395 residues: Imidazolonepropionase (395 aa).

Fe(3+) is bound by residues histidine 63 and histidine 65. Zn(2+) is bound by residues histidine 63 and histidine 65. 4-imidazolone-5-propanoate-binding residues include arginine 72, tyrosine 135, and histidine 168. Tyrosine 135 contacts N-formimidoyl-L-glutamate. Histidine 233 provides a ligand contact to Fe(3+). Residue histidine 233 participates in Zn(2+) binding. Glutamine 236 is a 4-imidazolone-5-propanoate binding site. Aspartate 308 is a Fe(3+) binding site. A Zn(2+)-binding site is contributed by aspartate 308. N-formimidoyl-L-glutamate contacts are provided by asparagine 310 and glycine 312. Threonine 313 serves as a coordination point for 4-imidazolone-5-propanoate.

The protein belongs to the metallo-dependent hydrolases superfamily. HutI family. Zn(2+) is required as a cofactor. Fe(3+) serves as cofactor.

The protein resides in the cytoplasm. The catalysed reaction is 4-imidazolone-5-propanoate + H2O = N-formimidoyl-L-glutamate. It participates in amino-acid degradation; L-histidine degradation into L-glutamate; N-formimidoyl-L-glutamate from L-histidine: step 3/3. Functionally, catalyzes the hydrolytic cleavage of the carbon-nitrogen bond in imidazolone-5-propanoate to yield N-formimidoyl-L-glutamate. It is the third step in the universal histidine degradation pathway. This chain is Imidazolonepropionase, found in Cereibacter sphaeroides (strain ATCC 17029 / ATH 2.4.9) (Rhodobacter sphaeroides).